A 291-amino-acid chain; its full sequence is uncharacterized protein (291 aa).

To E.cuniculi ECU03_0120.

This is an uncharacterized protein from Encephalitozoon cuniculi (strain GB-M1) (Microsporidian parasite).